Here is a 266-residue protein sequence, read N- to C-terminus: Leucine-rich repeat-containing protein 3 (266 aa).

An N-terminal signal peptide occupies residues 1-38 (MTFPAGAYVLRKVFIPHGCPLIFRLLLAVICLSVPSFA). An LRRNT domain is found at 39–70 (CPKSCHCSERNSLTVVQCSSRNLEEIPPDLPH). 3 LRR repeats span residues 71–92 (DTVSLQLSSNHITKIPNQAFKN), 95–116 (WLQELDLSRNAIETVDAGAFKG), and 120–141 (SLRTLDLSHNHMQGVPKEAFAR). An LRRCT domain is found at 151–204 (NPWHCECTLQEVLRELRLDPETVNEVSCHTSDQEKYAGKPVIQVLDSGINFCNF). The chain crosses the membrane as a helical span at residues 211–231 (VAMFVTMFGWFTMVIAYVIYY).

It belongs to the LRRC3 family.

It is found in the membrane. The protein is Leucine-rich repeat-containing protein 3 (lrrc3) of Danio rerio (Zebrafish).